A 354-amino-acid chain; its full sequence is MSGGKQHNAVSIPVNREQRSFEKQRRDLLTGLEHGGGAHRGNSIAPYTEDWPSTVDNWIDSSWKRWDDDMRRLRRGMFALLPLDTFSIGILENPFALMHQMDRQIQDIRERMGSLDVPSTGSVNDFLKDAYEVGEDGKVHFKVRFDAQGFAPQDINVTSSENRVTVHAKKETTTDGRKCSREFCRMVQLPKSIDDSQLKCRMTDDGVLMLEAPVKVDQNQSLTLNESGQVAVRPKSDNQIKAVPASQALVAKGVHGLSYVDDGSGGKRLHVEVAVDPVYKPEDLFVNVDSNRVVVSGRHHKQKSDQHGRSSSFAEFSQSYAIPETVDPLSVSAQVVGNTLVLEAPLEKQHAITH.

Residues 1 to 21 (MSGGKQHNAVSIPVNREQRSF) are disordered. SHSP domains are found at residues 122 to 233 (SVND…VAVR) and 251 to 354 (AKGV…AITH).

This sequence belongs to the small heat shock protein (HSP20) family.

This Schistosoma mansoni (Blood fluke) protein is Major egg antigen.